Reading from the N-terminus, the 433-residue chain is Homeobox protein Hox-D3 (433 aa).

3 disordered regions span residues 44 to 198 (STPH…SKRV), 258 to 280 (GILH…AAGH), and 401 to 433 (HHGP…LTHL). The segment covering 58 to 74 (SLDSDYPSSACSIQSSA) has biased composition (polar residues). The segment covering 97–106 (NSQGGGGGNQ) has biased composition (gly residues). Over residues 116–132 (PPQPPPPPPPTLPPSSP) the composition is skewed to pro residues. The segment covering 146 to 159 (GGLSASSSSSTISK) has biased composition (low complexity). The Antp-type hexapeptide signature appears at 161 to 166 (IFPWMK). Over residues 171-183 (NSKQKNSCATSGE) the composition is skewed to polar residues. The segment at residues 195–254 (SKRVRTAYTSAQLVELEKEFHFNRYLCRPRRVEMANLLNLTERQIKIWFQNRRMKYKKDQ) is a DNA-binding region (homeobox).

The protein belongs to the Antp homeobox family. As to expression, detected in adult kidney, but not in other adult tissues tested.

The protein localises to the nucleus. Its function is as follows. Sequence-specific transcription factor which is part of a developmental regulatory system that provides cells with specific positional identities on the anterior-posterior axis. The sequence is that of Homeobox protein Hox-D3 (Hoxd3) from Mus musculus (Mouse).